We begin with the raw amino-acid sequence, 214 residues long: MRHILVTGFEPFGGETLNPSWEVVKQLEGMTIDDCRVVTRQLPCVFGESLTLLNSAIDELNPTVVIAVGQAGGRVDITVERVGINVDDARIPDNRGQQPIDVAIVPDGPAAWFSSLPIKAMVAAMREKGIPASVSQTAGTFVCNHVMYGLLHKIRERTNVKGGFIHIPYLPEQAAAHAGAPSMATQTVKAALEIALTVALRQSSDINAVGGATH.

Residues glutamate 80, cysteine 143, and histidine 166 contribute to the active site.

The protein belongs to the peptidase C15 family. Homotetramer.

The protein localises to the cytoplasm. It catalyses the reaction Release of an N-terminal pyroglutamyl group from a polypeptide, the second amino acid generally not being Pro.. Its function is as follows. Removes 5-oxoproline from various penultimate amino acid residues except L-proline. The sequence is that of Pyrrolidone-carboxylate peptidase from Enterobacter sp. (strain 638).